A 130-amino-acid polypeptide reads, in one-letter code: Peptide methionine sulfoxide reductase MsrB (130 aa).

Positions 1-122 (MKKREDMTEM…NSVSMAFEDS (122 aa)) constitute a MsrB domain. Positions 39, 42, 88, and 91 each coordinate Zn(2+). Cysteine 111 functions as the Nucleophile in the catalytic mechanism.

It belongs to the MsrB Met sulfoxide reductase family. The cofactor is Zn(2+).

It catalyses the reaction L-methionyl-[protein] + [thioredoxin]-disulfide + H2O = L-methionyl-(R)-S-oxide-[protein] + [thioredoxin]-dithiol. This is Peptide methionine sulfoxide reductase MsrB from Pasteurella multocida (strain Pm70).